We begin with the raw amino-acid sequence, 206 residues long: Large ribosomal subunit protein uL4 (206 aa).

Residues 43–94 form a disordered region; it reads ARSGNRAQKDREQVKHTTKKPWRQKGTGRARAGMSSSPLWRGGGRIFPNSPE. Residues 58–70 are compositionally biased toward basic residues; sequence HTTKKPWRQKGTG.

The protein belongs to the universal ribosomal protein uL4 family. As to quaternary structure, part of the 50S ribosomal subunit.

Functionally, one of the primary rRNA binding proteins, this protein initially binds near the 5'-end of the 23S rRNA. It is important during the early stages of 50S assembly. It makes multiple contacts with different domains of the 23S rRNA in the assembled 50S subunit and ribosome. Its function is as follows. Forms part of the polypeptide exit tunnel. This Polynucleobacter asymbioticus (strain DSM 18221 / CIP 109841 / QLW-P1DMWA-1) (Polynucleobacter necessarius subsp. asymbioticus) protein is Large ribosomal subunit protein uL4.